A 194-amino-acid polypeptide reads, in one-letter code: Transposon Tn2501 resolvase (194 aa).

Residues 3-143 (RVFAYCRVST…SGIARAKATG (141 aa)) form the Resolvase/invertase-type recombinase catalytic domain. Ser-11 functions as the O-(5'-phospho-DNA)-serine intermediate in the catalytic mechanism. A DNA-binding region (H-T-H motif) is located at residues 170–189 (ISAIAREFNTTRQTILRVKA).

It belongs to the site-specific recombinase resolvase family.

Functionally, resolvase catalyzes the resolution (a site-specific recombination) of the cointegrated replicon to yield the final transposition products. The polypeptide is Transposon Tn2501 resolvase (tnpR) (Escherichia coli).